The chain runs to 563 residues: Cytochrome P450 monooxygenase phqL (563 aa).

The next 3 membrane-spanning stretches (helical) occupy residues 20–40, 52–72, and 80–100; these read ENFSRLTTAFVAGIAAHIIIF, IPVGLFILQSCLFSYYLFVPG, and ALWLVGQITLGFIAGTTVSIL. The N-linked (GlcNAc...) asparagine glycan is linked to asparagine 279. Residues 362–382 form a helical membrane-spanning segment; sequence LVIFAGSGTVAVTIIGCLYFL. An N-linked (GlcNAc...) asparagine glycan is attached at asparagine 419. A heme-binding site is contributed by cysteine 502.

This sequence belongs to the cytochrome P450 family. It depends on heme as a cofactor.

It localises to the membrane. The protein operates within alkaloid biosynthesis. In terms of biological role, cytochrome P450 monooxygenase; part of the gene cluster that mediates the biosynthesis of paraherquamide, a fungal indole alkaloid that belongs to a family of natural products containing a characteristic bicyclo[2.2.2]diazaoctane core. The first steps in the biosynthesis of paraherquamide is the production of the beta-methyl-proline precursor from L-isoleucine. They require oxidation of a terminally hydroxylated L-isoleucine to the corresponding aldehyde by enzymes which have still to be identified. Spontaneous cyclization and dehydration would yield the 4-methyl pyrolline-5-carboxylic acid, which is then reduced by the pyrroline-5-carboxylate reductase phqD leading to the beta-methyl-proline precursor. The next step of paraherquamide biosynthesis involves coupling of beta-methyl-proline and L-tryptophan by the bimodular NRPS phqB, to produce a monooxopiperazine intermediate. The reductase (R) domain of phqB utilizes NADPH for hydride transfer to reduce the thioester bond of the T domain-tethered linear dipeptide to a hemithioaminal intermediate, which spontaneously cleaves the C-S bond to release the aldehyde product. This compound undergoes spontaneous cyclization and dehydration to give a dienamine which is reverse prenylated at C-2 by the reverse prenyltransferase phqJ. The other prenyltransferase present in the cluster, phqI may be a redundant gene in the pathway. During biosynthetic assembly, the key step to produce the polycyclic core is catalyzed by the bifunctional reductase and intramolecular [4+2] Diels-Alderase, phqE, resulting in formation of the [2.2.2] diazaoctane intermediate preparaherquamide. Following formation of preparaherquamide, an indole 2,3-epoxidation-initiated pinacol-like rearrangement is catalyzed by the phqK FAD-dependent monooxygenase. The prenyltransferase phqA, the cytochrome P450 monooxygenase phqL, and the FAD-linked oxidoreductase phqH (or the cytochrome P450 monooxygenase phqM), are proposed to be involved in the formation of the pyran ring. The FAD-dependent monooxygenase phqK is likely responsible for generation of the spiro-oxindole, and the N-methylation is likely mediated by the phqN methyltransferase leading to the isolable natural product paraherquamide F. However, the order of these biosynthetic steps has still to be determined. In late-stage paraherquamide biosynthesis, the third P450 monooxygenase, phqO, is probably responsible for the C-14 hydroxylation, transforming paraherquamide F to paraherquamide G, and paraherquamide E to the final product paraherquamide A. The expansion from the 6-membered ring pyran (in paraherquamides F and G) to the 7-membered dioxepin ring (in paraherquamides A and E) represents a poorly understood but intriguing process that probably involves the 2-oxoglutarate-dependent dioxygenase phqC. Finally, the remaining members of the paraherquamide cluster, including phqI as well as phqM (or phqH), do not have a clearly prescribed role and appear to be redundant. The chain is Cytochrome P450 monooxygenase phqL from Penicillium fellutanum.